The sequence spans 350 residues: Phosphoribosylformylglycinamidine cyclo-ligase (350 aa).

Belongs to the AIR synthase family.

The protein localises to the cytoplasm. It carries out the reaction 2-formamido-N(1)-(5-O-phospho-beta-D-ribosyl)acetamidine + ATP = 5-amino-1-(5-phospho-beta-D-ribosyl)imidazole + ADP + phosphate + H(+). It functions in the pathway purine metabolism; IMP biosynthesis via de novo pathway; 5-amino-1-(5-phospho-D-ribosyl)imidazole from N(2)-formyl-N(1)-(5-phospho-D-ribosyl)glycinamide: step 2/2. The protein is Phosphoribosylformylglycinamidine cyclo-ligase of Cupriavidus pinatubonensis (strain JMP 134 / LMG 1197) (Cupriavidus necator (strain JMP 134)).